Reading from the N-terminus, the 293-residue chain is Bifunctional protein FolD (293 aa).

Residues 166-168 (GRS), Ser-191, and Ile-232 contribute to the NADP(+) site.

Belongs to the tetrahydrofolate dehydrogenase/cyclohydrolase family. As to quaternary structure, homodimer.

It carries out the reaction (6R)-5,10-methylene-5,6,7,8-tetrahydrofolate + NADP(+) = (6R)-5,10-methenyltetrahydrofolate + NADPH. The catalysed reaction is (6R)-5,10-methenyltetrahydrofolate + H2O = (6R)-10-formyltetrahydrofolate + H(+). Its pathway is one-carbon metabolism; tetrahydrofolate interconversion. Its function is as follows. Catalyzes the oxidation of 5,10-methylenetetrahydrofolate to 5,10-methenyltetrahydrofolate and then the hydrolysis of 5,10-methenyltetrahydrofolate to 10-formyltetrahydrofolate. In Synechococcus sp. (strain JA-2-3B'a(2-13)) (Cyanobacteria bacterium Yellowstone B-Prime), this protein is Bifunctional protein FolD.